The chain runs to 127 residues: Small ribosomal subunit protein uS12 (127 aa).

The interval Ile-8 to Pro-28 is disordered. The residue at position 89 (Asp-89) is a 3-methylthioaspartic acid. The disordered stretch occupies residues Leu-102–Lys-127. The segment covering Gly-113 to Lys-127 has biased composition (basic residues).

This sequence belongs to the universal ribosomal protein uS12 family. In terms of assembly, part of the 30S ribosomal subunit. Contacts proteins S8 and S17. May interact with IF1 in the 30S initiation complex.

Its function is as follows. With S4 and S5 plays an important role in translational accuracy. Functionally, interacts with and stabilizes bases of the 16S rRNA that are involved in tRNA selection in the A site and with the mRNA backbone. Located at the interface of the 30S and 50S subunits, it traverses the body of the 30S subunit contacting proteins on the other side and probably holding the rRNA structure together. The combined cluster of proteins S8, S12 and S17 appears to hold together the shoulder and platform of the 30S subunit. The chain is Small ribosomal subunit protein uS12 from Nostoc sp. (strain PCC 7120 / SAG 25.82 / UTEX 2576).